We begin with the raw amino-acid sequence, 211 residues long: Shikimate kinase (211 aa).

Residues 1-23 (MNASANLCAASDNDPQPGDQEAA) are disordered. 50–55 (GAGKTT) is an ATP binding site. Thr-54 serves as a coordination point for Mg(2+). The substrate site is built by Asp-72, Arg-96, and Gly-118. Arg-156 provides a ligand contact to ATP. Arg-175 contributes to the substrate binding site.

The protein belongs to the shikimate kinase family. In terms of assembly, monomer. Mg(2+) serves as cofactor.

It is found in the cytoplasm. It carries out the reaction shikimate + ATP = 3-phosphoshikimate + ADP + H(+). It participates in metabolic intermediate biosynthesis; chorismate biosynthesis; chorismate from D-erythrose 4-phosphate and phosphoenolpyruvate: step 5/7. Catalyzes the specific phosphorylation of the 3-hydroxyl group of shikimic acid using ATP as a cosubstrate. The chain is Shikimate kinase from Bordetella bronchiseptica (strain ATCC BAA-588 / NCTC 13252 / RB50) (Alcaligenes bronchisepticus).